Consider the following 730-residue polypeptide: Nitrogen fixation protein FixI (730 aa).

At 1–101 (MHVTRDFSHY…AEVAEVAESR (101 aa)) the chain is on the cytoplasmic side. The HMA domain occupies 19–85 (KHIDLAVEGV…RLEELGYKAY (67 aa)). A metal cation contacts are provided by cysteine 30 and cysteine 33. Residues 102 to 123 (FLLRCLGVAAFATMNVMMLSIP) form a helical membrane-spanning segment. At 124–138 (VWSGNVSDMLPEQRD) the chain is on the extracellular side. The chain crosses the membrane as a helical span at residues 139 to 162 (FFHWLSALIALPAAAYAGQPFFRS). Topologically, residues 163–168 (AWRALS) are cytoplasmic. A helical transmembrane segment spans residues 169–190 (AKTTNMDVPISIGVILALGMSV). The Extracellular portion of the chain corresponds to 191–202 (VETIHHAEHAYF). The helical transmembrane segment at 203-223 (DAAIMLLTFLLVGRFLDQNMR) threads the bilayer. Topologically, residues 224 to 352 (RRTRAVAGNL…RSRYMRLADR (129 aa)) are cytoplasmic. A helical membrane pass occupies residues 353 to 375 (ASRLYAPVVHATALITILGWVIA). Residues 376–382 (GASWHDA) lie on the Extracellular side of the membrane. A helical transmembrane segment spans residues 383-400 (IVTGVAVLIITCPCALGL). The Cytoplasmic portion of the chain corresponds to 401–676 (AIPTVQTVAS…DSARKALHLM (276 aa)). Aspartate 438 functions as the 4-aspartylphosphate intermediate in the catalytic mechanism. Mg(2+) is bound by residues aspartate 622 and aspartate 626. A helical transmembrane segment spans residues 677–696 (RQNLWLAIGYNVLAVPVAIS). Residues 697–701 (GVVTP) lie on the Extracellular side of the membrane. Residues 702-720 (LIAAAAMSGSSILVMLNSL) form a helical membrane-spanning segment. The Cytoplasmic segment spans residues 721–730 (RARSDSREIV).

It belongs to the cation transport ATPase (P-type) (TC 3.A.3) family. Type IB subfamily.

It is found in the cell membrane. The catalysed reaction is ATP + H2O = ADP + phosphate + H(+). In terms of biological role, fixI is a pump of a specific cation involved in symbiotic nitrogen fixation. The four proteins FixG, FixH, FixI, and FixS may participate in a membrane-bound complex coupling the FixI cation pump with a redox process catalyzed by FixG. This is Nitrogen fixation protein FixI (fixI) from Bradyrhizobium diazoefficiens (strain JCM 10833 / BCRC 13528 / IAM 13628 / NBRC 14792 / USDA 110).